We begin with the raw amino-acid sequence, 251 residues long: Carboxy-S-adenosyl-L-methionine synthase (251 aa).

S-adenosyl-L-methionine-binding positions include tyrosine 48, 73–75 (GCS), asparagine 140, and arginine 207.

This sequence belongs to the class I-like SAM-binding methyltransferase superfamily. Cx-SAM synthase family. Homodimer.

The enzyme catalyses prephenate + S-adenosyl-L-methionine = carboxy-S-adenosyl-L-methionine + 3-phenylpyruvate + H2O. Catalyzes the conversion of S-adenosyl-L-methionine (SAM) to carboxy-S-adenosyl-L-methionine (Cx-SAM). The polypeptide is Carboxy-S-adenosyl-L-methionine synthase (Hydrogenovibrio crunogenus (strain DSM 25203 / XCL-2) (Thiomicrospira crunogena)).